The following is a 1400-amino-acid chain: DNA-directed RNA polymerase subunit beta' (1400 aa).

4 residues coordinate Zn(2+): C71, C73, C86, and C89. The Mg(2+) site is built by D462, D464, and D466. C811, C885, C892, and C895 together coordinate Zn(2+).

The protein belongs to the RNA polymerase beta' chain family. The RNAP catalytic core consists of 2 alpha, 1 beta, 1 beta' and 1 omega subunit. When a sigma factor is associated with the core the holoenzyme is formed, which can initiate transcription. Requires Mg(2+) as cofactor. Zn(2+) serves as cofactor.

It catalyses the reaction RNA(n) + a ribonucleoside 5'-triphosphate = RNA(n+1) + diphosphate. In terms of biological role, DNA-dependent RNA polymerase catalyzes the transcription of DNA into RNA using the four ribonucleoside triphosphates as substrates. The sequence is that of DNA-directed RNA polymerase subunit beta' from Brucella anthropi (strain ATCC 49188 / DSM 6882 / CCUG 24695 / JCM 21032 / LMG 3331 / NBRC 15819 / NCTC 12168 / Alc 37) (Ochrobactrum anthropi).